The sequence spans 676 residues: Pre-mRNA-splicing factor clf1 (676 aa).

HAT repeat units lie at residues 52-84 (EYQG…WELE), 86-118 (KEFR…SEMR), 120-152 (RNIN…MEET), 154-185 (GNIQ…LEKR), 187-218 (NEFE…FEEE), 220-255 (GTSD…FEAK), 257-291 (KEYE…FEKQ), 301-333 (VILS…LEET), 335-369 (GDPD…LWIF), 379-415 (KDVD…FDIR), 417-448 (MDLQ…LERQ), 450-482 (FEFV…LERG), 484-518 (DDSE…FEEY), and 520-551 (GEYD…FEIN). Residues 554–566 (EEEEEEEEEEEEE) show a composition bias toward acidic residues. The segment at 554 to 573 (EEEEEEEEEEEEERPVSDEA) is disordered. An HAT 15 repeat occupies 572–610 (EAKRRARAVFERAHKVFKEKEMKEERVELLNAWRAFEHT).

The protein belongs to the crooked-neck family. As to quaternary structure, associated with the spliceosome.

The protein localises to the nucleus. Its function is as follows. Involved in pre-mRNA splicing and cell cycle progression. Required for the spliceosome assembly and initiation of the DNA replication. The sequence is that of Pre-mRNA-splicing factor clf1 (clf1) from Aspergillus fumigatus (strain ATCC MYA-4609 / CBS 101355 / FGSC A1100 / Af293) (Neosartorya fumigata).